The chain runs to 535 residues: ATP-dependent RNA helicase DBP3 (535 aa).

Residues 1–21 (MGSSSKSEKRKYDDGEELLER) are compositionally biased toward basic and acidic residues. Residues 1 to 96 (MGSSSKSEKR…TSYGYVQSSK (96 aa)) are disordered. Positions 35 to 54 (KKDKKEKKDKKEKKDKKEKK) are enriched in basic residues. The segment covering 55–72 (DKKEKNKESKEAEARDDS) has biased composition (basic and acidic residues). Residues 79–88 (SSSSSTESTS) show a composition bias toward low complexity. The short motif at 128–154 (LSFDQIKLQKDVSSKLTKFPKPTPIQS) is the Q motif element. The Helicase ATP-binding domain maps to 157–329 (WPFLLDGKDV…NNFMNQPVKV (173 aa)). ATP is bound at residue 170 to 177 (AETGSGKT). The DEAD box motif lies at 276–279 (DEAD). A Helicase C-terminal domain is found at 362–508 (NLLQKYQNTG…PVPEALLKYG (147 aa)).

The protein belongs to the DEAD box helicase family. DDX5/DBP2 subfamily.

The protein localises to the nucleus. The protein resides in the nucleolus. It carries out the reaction ATP + H2O = ADP + phosphate + H(+). Functionally, ATP-dependent RNA helicase required for 60S ribosomal subunit synthesis. Involved in efficient pre-rRNA processing, predominantly at site A3, which is necessary for the normal formation of 25S and 5.8S rRNAs. The chain is ATP-dependent RNA helicase DBP3 (DBP3) from Lodderomyces elongisporus (strain ATCC 11503 / CBS 2605 / JCM 1781 / NBRC 1676 / NRRL YB-4239) (Yeast).